Consider the following 118-residue polypeptide: uncharacterized protein (118 aa).

The span at 1-12 shows a compositional bias: polar residues; it reads MADDNVSFTDQG. The segment at 1–63 is disordered; sequence MADDNVSFTD…KKGKTKKVRK (63 aa). Residues 39-63 show a composition bias toward basic residues; that stretch reads TKKKGKKNKKSKKKAKKGKTKKVRK. Residues 81–101 form a helical membrane-spanning segment; sequence FCAGIIVAMIMLFVIIIYGII.

It localises to the membrane. This is an uncharacterized protein from Caenorhabditis elegans.